The primary structure comprises 286 residues: Nucleotide-binding protein Tgr7_0722 (286 aa).

Residue 8–15 coordinates ATP; the sequence is GLSGSGKS. Residue 60–63 participates in GTP binding; that stretch reads DVRS.

It belongs to the RapZ-like family.

Displays ATPase and GTPase activities. This Thioalkalivibrio sulfidiphilus (strain HL-EbGR7) protein is Nucleotide-binding protein Tgr7_0722.